We begin with the raw amino-acid sequence, 165 residues long: MNREKLMKMANTVRTGGKGTVRRKKKAVHKTNTTDDKRLQSTLKRIGVNSIPAIEEVNIFKDDVVIQFINPKVQASIAANTWVVSGSPQTKKLQDILPQIISQLGPDNMDNLKKLAEQFQKQASGEGNAASATIQEEDDDDVPELVGETFETAAEEKAPAAAASS.

An NAC-A/B domain is found at 33-97 (TTDDKRLQST…PQTKKLQDIL (65 aa)). Polar residues predominate over residues 120–134 (QKQASGEGNAASATI). A disordered region spans residues 120-144 (QKQASGEGNAASATIQEEDDDDVPE).

Belongs to the NAC-beta family. As to quaternary structure, part of the nascent polypeptide-associated complex (NAC). Interacts with EIF(ISO)4E.

The chain is Basic transcription factor 3 from Arabidopsis thaliana (Mouse-ear cress).